Consider the following 387-residue polypeptide: Formate-dependent phosphoribosylglycinamide formyltransferase (387 aa).

N(1)-(5-phospho-beta-D-ribosyl)glycinamide contacts are provided by residues 12–13 (EL) and glutamate 72. Residues arginine 104, lysine 145, 150-155 (SSGKGQ), 185-188 (EEFI), and glutamate 193 contribute to the ATP site. The 192-residue stretch at 109-300 (DLAAKDLKLL…EFELHLRAIL (192 aa)) folds into the ATP-grasp domain. 2 residues coordinate Mg(2+): glutamate 258 and glutamate 270. Residues aspartate 277, lysine 348, and 355-356 (RR) contribute to the N(1)-(5-phospho-beta-D-ribosyl)glycinamide site.

Belongs to the PurK/PurT family. Homodimer.

It carries out the reaction N(1)-(5-phospho-beta-D-ribosyl)glycinamide + formate + ATP = N(2)-formyl-N(1)-(5-phospho-beta-D-ribosyl)glycinamide + ADP + phosphate + H(+). The protein operates within purine metabolism; IMP biosynthesis via de novo pathway; N(2)-formyl-N(1)-(5-phospho-D-ribosyl)glycinamide from N(1)-(5-phospho-D-ribosyl)glycinamide (formate route): step 1/1. Involved in the de novo purine biosynthesis. Catalyzes the transfer of formate to 5-phospho-ribosyl-glycinamide (GAR), producing 5-phospho-ribosyl-N-formylglycinamide (FGAR). Formate is provided by PurU via hydrolysis of 10-formyl-tetrahydrofolate. This Leptospira interrogans serogroup Icterohaemorrhagiae serovar copenhageni (strain Fiocruz L1-130) protein is Formate-dependent phosphoribosylglycinamide formyltransferase.